Here is a 540-residue protein sequence, read N- to C-terminus: Membrane protein insertase YidC (540 aa).

Helical transmembrane passes span 7–27 (LLVL…QMDY), 345–365 (IVSN…GILY), 415–435 (LGGC…YWTF), 453–473 (LSAQ…MFLL), and 494–514 (PLIF…YWLV).

The protein belongs to the OXA1/ALB3/YidC family. Type 1 subfamily. As to quaternary structure, interacts with the Sec translocase complex via SecD. Specifically interacts with transmembrane segments of nascent integral membrane proteins during membrane integration.

It is found in the cell inner membrane. In terms of biological role, required for the insertion and/or proper folding and/or complex formation of integral membrane proteins into the membrane. Involved in integration of membrane proteins that insert both dependently and independently of the Sec translocase complex, as well as at least some lipoproteins. Aids folding of multispanning membrane proteins. This is Membrane protein insertase YidC from Mannheimia succiniciproducens (strain KCTC 0769BP / MBEL55E).